A 280-amino-acid polypeptide reads, in one-letter code: Shikimate dehydrogenase (NADP(+)) (280 aa).

Residues 19–21 (SFS) and T66 each bind shikimate. Residue K70 is the Proton acceptor of the active site. E82 is an NADP(+) binding site. Shikimate contacts are provided by N91 and D106. Residues 130 to 134 (GSGGA) and L222 contribute to the NADP(+) site. Residue Y224 participates in shikimate binding. G245 provides a ligand contact to NADP(+).

The protein belongs to the shikimate dehydrogenase family. As to quaternary structure, homodimer.

The catalysed reaction is shikimate + NADP(+) = 3-dehydroshikimate + NADPH + H(+). The protein operates within metabolic intermediate biosynthesis; chorismate biosynthesis; chorismate from D-erythrose 4-phosphate and phosphoenolpyruvate: step 4/7. In terms of biological role, involved in the biosynthesis of the chorismate, which leads to the biosynthesis of aromatic amino acids. Catalyzes the reversible NADPH linked reduction of 3-dehydroshikimate (DHSA) to yield shikimate (SA). The polypeptide is Shikimate dehydrogenase (NADP(+)) (Methanococcus maripaludis (strain C7 / ATCC BAA-1331)).